Reading from the N-terminus, the 125-residue chain is Large ribosomal subunit protein bL12 (125 aa).

Belongs to the bacterial ribosomal protein bL12 family. As to quaternary structure, homodimer. Part of the ribosomal stalk of the 50S ribosomal subunit. Forms a multimeric L10(L12)X complex, where L10 forms an elongated spine to which 2 to 4 L12 dimers bind in a sequential fashion. Binds GTP-bound translation factors.

Forms part of the ribosomal stalk which helps the ribosome interact with GTP-bound translation factors. Is thus essential for accurate translation. The protein is Large ribosomal subunit protein bL12 of Campylobacter jejuni subsp. jejuni serotype O:6 (strain 81116 / NCTC 11828).